A 635-amino-acid chain; its full sequence is Dual specificity protein kinase zak2 (635 aa).

2 Protein kinase domains span residues 9–249 and 299–585; these read WEEI…HRLI and NKDD…QIYF. ATP contacts are provided by residues 15 to 23 and Lys45; that span reads IGSCNSKSR. Catalysis depends on Asp124, which acts as the Proton acceptor. Residues 305-313 and Lys326 each bind ATP; that span reads GGDGFFSVV. Asp427 functions as the Proton acceptor in the catalytic mechanism.

This sequence in the N-terminal section; belongs to the protein kinase superfamily. Ser/Thr protein kinase family. It in the C-terminal section; belongs to the protein kinase superfamily. TKL Tyr protein kinase family. Post-translationally, C-terminal tyrosine kinase domain is capable of autophosphorylation, in vitro. ZakA and zak2 are coexpressed in prestalk cell population, zakA is enriched in pstB populations and zak1 in pstA populations. ZakA and zak2 are coexpressed in prespore cells, zakA expression levels are 10 fold higher than zak2.

It carries out the reaction L-seryl-[protein] + ATP = O-phospho-L-seryl-[protein] + ADP + H(+). It catalyses the reaction L-threonyl-[protein] + ATP = O-phospho-L-threonyl-[protein] + ADP + H(+). The enzyme catalyses L-tyrosyl-[protein] + ATP = O-phospho-L-tyrosyl-[protein] + ADP + H(+). Its function is as follows. Positive regulator of gsk3/gskA activity required for cell pattern formation and a downstream effector of carC. The kinases, gsk3/gskA, zakA and zak2, form part of a signaling pathway that responds to extracellular cyclic AMP. The pathway has a role in transcriptional regulation; required to direct prespore/spore fates during development. Zak2 negatively regulates prestalk differentiation by regulating expression of ecmA. Phosphorylates Y-214 of gsk3/gskA, in vitro. This Dictyostelium discoideum (Social amoeba) protein is Dual specificity protein kinase zak2 (zak2).